Here is a 505-residue protein sequence, read N- to C-terminus: uncharacterized protein (505 aa).

Helical transmembrane passes span 9 to 29 (ANLTAFLLSVFLSVWMTPFIV), 49 to 69 (YFSVITVALSSVVVRFFSVAA), 86 to 106 (AASVLISLLLLLPLAGSAFFI), 122 to 142 (LSILIGSVLFILTFLMAGFGA), 156 to 176 (IQAVQMLIRVLSVLLLFACFA), 181 to 201 (QIQLAALAGAVIASVLSFYFF), 235 to 255 (IGVLLFLQIDLLTANLMLGAS), 261 to 281 (AAIIQFPLLLRSLAGTVASLF), 310 to 330 (LLLALPAALLGGLAGPFLTIW), 341 to 361 (LLFIHAGYLVVSLAFMPLFYI), 371 to 391 (PAIVTLLLGAVNVVLAVTLSG), 395 to 415 (LGLYGITLAGAISLILKNAIF), 435 to 455 (IIGPLSAAVFAWTVCKAIQFI), and 464 to 484 (LIATGVTVSFCYAVFAFMLVC).

Its subcellular location is the cell membrane. Functionally, may be involved in the production of the exopolysaccharide (EPS) component of the extracellular matrix during biofilm formation. EPS is responsible for the adhesion of chains of cells into bundles. This is an uncharacterized protein from Bacillus subtilis (strain 168).